The sequence spans 637 residues: Phosphomethylpyrimidine synthase (637 aa).

Substrate is bound by residues N242, M271, Y300, H336, 356 to 358 (SRG), 397 to 400 (DGLR), and E436. Residue H440 participates in Zn(2+) binding. Y463 provides a ligand contact to substrate. H504 lines the Zn(2+) pocket. Residues C584, C587, and C592 each contribute to the [4Fe-4S] cluster site.

This sequence belongs to the ThiC family. As to quaternary structure, homodimer. The cofactor is [4Fe-4S] cluster.

It catalyses the reaction 5-amino-1-(5-phospho-beta-D-ribosyl)imidazole + S-adenosyl-L-methionine = 4-amino-2-methyl-5-(phosphooxymethyl)pyrimidine + CO + 5'-deoxyadenosine + formate + L-methionine + 3 H(+). Its pathway is cofactor biosynthesis; thiamine diphosphate biosynthesis. Functionally, catalyzes the synthesis of the hydroxymethylpyrimidine phosphate (HMP-P) moiety of thiamine from aminoimidazole ribotide (AIR) in a radical S-adenosyl-L-methionine (SAM)-dependent reaction. This chain is Phosphomethylpyrimidine synthase, found in Bordetella avium (strain 197N).